Here is a 241-residue protein sequence, read N- to C-terminus: Sugar fermentation stimulation protein homolog (241 aa).

This sequence belongs to the SfsA family.

The protein is Sugar fermentation stimulation protein homolog of Halorhodospira halophila (strain DSM 244 / SL1) (Ectothiorhodospira halophila (strain DSM 244 / SL1)).